We begin with the raw amino-acid sequence, 286 residues long: Beta-lactamase SHV-8 (286 aa).

Positions 1-21 (MRYIRLCIISLLATLPLAVHA) are cleaved as a signal peptide. Catalysis depends on Ser-66, which acts as the Acyl-ester intermediate. The cysteines at positions 73 and 119 are disulfide-linked. The active-site Proton acceptor is the Glu-164. Substrate is bound at residue 230–232 (KTG).

This sequence belongs to the class-A beta-lactamase family.

The enzyme catalyses a beta-lactam + H2O = a substituted beta-amino acid. Functionally, SHV enzymes hydrolyze broad spectrum cephalosporins notably cefotaxime and ceftazidime. The protein is Beta-lactamase SHV-8 (bla) of Escherichia coli.